Reading from the N-terminus, the 378-residue chain is Ribosomal RNA large subunit methyltransferase G (378 aa).

Belongs to the methyltransferase superfamily. RlmG family.

The protein resides in the cytoplasm. The enzyme catalyses guanosine(1835) in 23S rRNA + S-adenosyl-L-methionine = N(2)-methylguanosine(1835) in 23S rRNA + S-adenosyl-L-homocysteine + H(+). Its function is as follows. Specifically methylates the guanine in position 1835 (m2G1835) of 23S rRNA. In Salmonella paratyphi A (strain ATCC 9150 / SARB42), this protein is Ribosomal RNA large subunit methyltransferase G.